A 548-amino-acid polypeptide reads, in one-letter code: Thermostable neutral protease NprT (548 aa).

A signal peptide spans 1 to 25 (MNKRAMLGAIGLAFGLLAAPIGASA). Residues 26–229 (KGESIVWNEQ…DSRQPGGGQP (204 aa)) constitute a propeptide, activation peptide. Asp289, Asp291, Gln293, and Asp370 together coordinate Ca(2+). His374 provides a ligand contact to Zn(2+). Glu375 is a catalytic residue. The Zn(2+) site is built by His378 and Glu398. 9 residues coordinate Ca(2+): Glu409, Asn415, Asp417, Glu419, Glu422, Tyr425, Thr426, Val429, and Asp432. His463 acts as the Proton donor in catalysis.

It belongs to the peptidase M4 family. Ca(2+) is required as a cofactor. Zn(2+) serves as cofactor.

It localises to the secreted. Its casein hydrolytic activity is inhibited almost completely by a chelating agent (EDTA), whereas neither diisopropyl fluorophosphate nor phenylmethylsulfonyl fluoride inhibit the proteolytic activity in vitro. Extracellular zinc metalloprotease. This chain is Thermostable neutral protease NprT (nprT), found in Geobacillus stearothermophilus (Bacillus stearothermophilus).